A 564-amino-acid chain; its full sequence is Probable lysosomal cobalamin transporter (564 aa).

A run of 9 helical transmembrane segments spans residues 8-28, 41-61, 94-114, 144-164, 188-208, 312-332, 375-395, 418-438, and 506-526; these read LIWS…STFI, VTLI…LLPV, TIVY…GIPF, YTLF…FIPT, ALTF…IIYT, LLAG…LCVT, VIFT…IAAF, LLLT…VAVI, and FFGA…LLVL.

It belongs to the LIMR family. LMBRD1 subfamily.

It localises to the lysosome membrane. Its function is as follows. Probable lysosomal cobalamin transporter. Required to export cobalamin from lysosomes allowing its conversion to cofactors. This chain is Probable lysosomal cobalamin transporter, found in Aspergillus clavatus (strain ATCC 1007 / CBS 513.65 / DSM 816 / NCTC 3887 / NRRL 1 / QM 1276 / 107).